Here is a 723-residue protein sequence, read N- to C-terminus: ATP-dependent DNA helicase RRM3 (723 aa).

Disordered regions lie at residues 1–31 (MFRS…SGSH) and 61–101 (DLES…DDDP). The residue at position 64 (Ser64) is a Phosphoserine. Residues 83–96 (NNSSSLFSQSQGSF) show a composition bias toward low complexity. Position 254–261 (254–261 (GSAGTGKS)) interacts with ATP. A DNA-binding region spans residues 682–701 (QVYVALSRAVTMDTLQVLNF).

Belongs to the helicase family. In terms of assembly, interacts with DEF1 and POL30.

It is found in the nucleus. The protein resides in the chromosome. The protein localises to the telomere. It carries out the reaction Couples ATP hydrolysis with the unwinding of duplex DNA at the replication fork by translocating in the 5'-3' direction. This creates two antiparallel DNA single strands (ssDNA). The leading ssDNA polymer is the template for DNA polymerase III holoenzyme which synthesizes a continuous strand.. It catalyses the reaction ATP + H2O = ADP + phosphate + H(+). 5' to 3' DNA replicative helicase recruited to paused replisomes to promote fork progression throughout nonhistone protein-DNA complexes, naturally occurring impediments that are encountered in each S phase where replication forks pauses. Needed for normal fork progression through over 1000 discrete sites scattered throughout the genome, like rDNA, tRNA genes, centromeres, active replication origins, or transcriptional silencers. Required for timely replication of the telomere and subtelomeric DNA and for wild-type levels of telomeric silencing. Involved in regulation of Ty1 transposition and protects the genome from instability at nascent sites of retrotransposition. Involved in DNA repair during stalled replication fork, regulation of fragile sites expression and essential for genome stability. Also plays a role in mtDNA replication. Has G-quadruplex (G4) unwinding activity and can suppress G4-induced genome instability when PIF1 levels are low. The protein is ATP-dependent DNA helicase RRM3 of Saccharomyces cerevisiae (strain ATCC 204508 / S288c) (Baker's yeast).